Consider the following 474-residue polypeptide: tRNA-2-methylthio-N(6)-dimethylallyladenosine synthase (474 aa).

The MTTase N-terminal domain occupies 3 to 120; that stretch reads KKLLIKTWGC…LPEMIKQSQT (118 aa). [4Fe-4S] cluster is bound by residues cysteine 12, cysteine 49, cysteine 83, cysteine 157, cysteine 161, and cysteine 164. Residues 143-375 form the Radical SAM core domain; it reads RAEGATAFVS…QQTINAQAMR (233 aa). The 64-residue stretch at 378-441 folds into the TRAM domain; it reads RLMLATEQRV…ANSLRGELVR (64 aa).

It belongs to the methylthiotransferase family. MiaB subfamily. As to quaternary structure, monomer. It depends on [4Fe-4S] cluster as a cofactor.

It localises to the cytoplasm. The catalysed reaction is N(6)-dimethylallyladenosine(37) in tRNA + (sulfur carrier)-SH + AH2 + 2 S-adenosyl-L-methionine = 2-methylsulfanyl-N(6)-dimethylallyladenosine(37) in tRNA + (sulfur carrier)-H + 5'-deoxyadenosine + L-methionine + A + S-adenosyl-L-homocysteine + 2 H(+). Functionally, catalyzes the methylthiolation of N6-(dimethylallyl)adenosine (i(6)A), leading to the formation of 2-methylthio-N6-(dimethylallyl)adenosine (ms(2)i(6)A) at position 37 in tRNAs that read codons beginning with uridine. This chain is tRNA-2-methylthio-N(6)-dimethylallyladenosine synthase, found in Vibrio parahaemolyticus serotype O3:K6 (strain RIMD 2210633).